The primary structure comprises 232 residues: uncharacterized protein (232 aa).

The protein resides in the cytoplasm. It is found in the nucleus. This is an uncharacterized protein from Saccharomyces cerevisiae (strain ATCC 204508 / S288c) (Baker's yeast).